The following is a 302-amino-acid chain: Methionyl-tRNA formyltransferase (302 aa).

Position 107 to 110 (S107 to P110) interacts with (6S)-5,6,7,8-tetrahydrofolate.

The protein belongs to the Fmt family.

It catalyses the reaction L-methionyl-tRNA(fMet) + (6R)-10-formyltetrahydrofolate = N-formyl-L-methionyl-tRNA(fMet) + (6S)-5,6,7,8-tetrahydrofolate + H(+). Functionally, attaches a formyl group to the free amino group of methionyl-tRNA(fMet). The formyl group appears to play a dual role in the initiator identity of N-formylmethionyl-tRNA by promoting its recognition by IF2 and preventing the misappropriation of this tRNA by the elongation apparatus. The chain is Methionyl-tRNA formyltransferase from Rickettsia massiliae (strain Mtu5).